A 267-amino-acid chain; its full sequence is Thiamine thiazole synthase (267 aa).

Residues Ser41, 60–61 (ER), Gly68, Val132, and 160–162 (HVD) each bind NAD(+). Fe cation contacts are provided by Asp162 and His177. Met227 lines the NAD(+) pocket. Arg237 contacts glycine.

Belongs to the THI4 family. Homooctamer; tetramer of dimers. Fe(2+) is required as a cofactor.

The catalysed reaction is hydrogen sulfide + glycine + NAD(+) = ADP-5-ethyl-4-methylthiazole-2-carboxylate + nicotinamide + 3 H2O + H(+). Its pathway is cofactor biosynthesis; thiamine diphosphate biosynthesis. Involved in the biosynthesis of the thiazole moiety of thiamine. Catalyzes the conversion of NAD and glycine to adenosine diphosphate 5-(2-hydroxyethyl)-4-methylthiazole-2-carboxylate (ADT), an adenylated thiazole intermediate, using free sulfide as a source of sulfur. This Saccharolobus solfataricus (strain ATCC 35092 / DSM 1617 / JCM 11322 / P2) (Sulfolobus solfataricus) protein is Thiamine thiazole synthase.